We begin with the raw amino-acid sequence, 198 residues long: Na(+)-translocating NADH-quinone reductase subunit E (198 aa).

The next 6 helical transmembrane spans lie at 11–31 (AVFI…FLAV), 35–55 (VSPA…AVPV), 77–97 (FLNF…LEMV), 110–130 (GIFL…SFMV), 140–160 (IVYG…LAGL), and 176–196 (LGIT…FSGI).

The protein belongs to the NqrDE/RnfAE family. Composed of six subunits; NqrA, NqrB, NqrC, NqrD, NqrE and NqrF.

It is found in the cell inner membrane. The catalysed reaction is a ubiquinone + n Na(+)(in) + NADH + H(+) = a ubiquinol + n Na(+)(out) + NAD(+). In terms of biological role, NQR complex catalyzes the reduction of ubiquinone-1 to ubiquinol by two successive reactions, coupled with the transport of Na(+) ions from the cytoplasm to the periplasm. NqrA to NqrE are probably involved in the second step, the conversion of ubisemiquinone to ubiquinol. The polypeptide is Na(+)-translocating NADH-quinone reductase subunit E (Haemophilus influenzae (strain ATCC 51907 / DSM 11121 / KW20 / Rd)).